A 76-amino-acid chain; its full sequence is Tautomerase PptA (76 aa).

Residue Pro2 is the Proton acceptor; via imino nitrogen of the active site.

This sequence belongs to the 4-oxalocrotonate tautomerase family. PptA subfamily. Homodimer.

It localises to the cytoplasm. The protein is Tautomerase PptA of Cronobacter sakazakii (strain ATCC BAA-894) (Enterobacter sakazakii).